We begin with the raw amino-acid sequence, 369 residues long: Cytoplasmic tRNA 2-thiolation protein 1 (369 aa).

Belongs to the TtcA family. CTU1/NCS6/ATPBD3 subfamily.

The protein resides in the cytoplasm. It participates in tRNA modification; 5-methoxycarbonylmethyl-2-thiouridine-tRNA biosynthesis. Plays a central role in 2-thiolation of mcm(5)S(2)U at tRNA wobble positions of tRNA(Lys), tRNA(Glu) and tRNA(Gln). Directly binds tRNAs and probably acts by catalyzing adenylation of tRNAs, an intermediate required for 2-thiolation. It is unclear whether it acts as a sulfurtransferase that transfers sulfur from thiocarboxylated URM1 onto the uridine of tRNAs at wobble position. Prior mcm(5) tRNA modification by the elongator complex is required for 2-thiolation. May also be involved in protein urmylation. The chain is Cytoplasmic tRNA 2-thiolation protein 1 from Cryptococcus neoformans var. neoformans serotype D (strain JEC21 / ATCC MYA-565) (Filobasidiella neoformans).